The chain runs to 402 residues: Septin CDC11 (402 aa).

Position 1 is an N-acetylmethionine (Met-1). The residue at position 4 (Ser-4) is a Phosphoserine. The short motif at 14 to 21 (RKRKTLKK) is the Basic motif element. Residues 21–307 (KSINFSIMII…ENYRTEALSG (287 aa)) enclose the Septin-type G domain. The segment at 31–38 (GESGSGRS) is G1 motif. Residue 31–38 (GESGSGRS) participates in GTP binding. A G3 motif region spans residues 89-92 (DTPN). Residues 171–174 (SKAD) form a G4 motif region. GTP contacts are provided by residues 172-180 (KADSLTPKE) and Gly-233. The stretch at 318–376 (AKQEISESDYLMKEEQIKLEEERLRKFEERVHQDLINKRKELLERENELKEIEKRLLAE) forms a coiled coil. Phosphoserine; by CDC28 is present on Ser-394. Ser-395 is modified (phosphoserine; by GIN4).

This sequence belongs to the TRAFAC class TrmE-Era-EngA-EngB-Septin-like GTPase superfamily. Septin GTPase family. As to quaternary structure, component of the septin complex which consists of CDC3, CDC10, CDC11, CDC12 and probably SEP7. The purified septin complex appeared to have a stoichiometry of 2 CDC3, 1 to 2 CDC10, 1 CDC11, 2 CDC12, and 1 or none SEP7 subunit. Interacts with HSL1. Post-translationally, hyphal induction causes immediate phosphorylation at Ser-395 by GIN4 and at Ser-394 by CDC28-CCN1. GIN4 phosphorylation at Ser-395 primes CDC11 for further phosphorylation by CDC28-CCN1. CDC28-HGC1 then maintains CDC11 phosphorylation throughout hyphal growth. Ser-4 is also phosphorylated in yeast cells but not hyphal cells. Met-1 is acetylated.

The protein resides in the bud neck. Its function is as follows. Septins are GTPases involved in cytokinesis that assemble early in the cell cycle as a patch at the incipient bud site and form a ring before bud emergence, which transforms into an hour-glass shaped collar of cortical filaments that spans both sides of the mother-bud neck. This collar persists until just before cytokinesis, when it splits into two rings that occupy opposite sides of the neck. The septins at the bud neck serve as a structural scaffold that recruits different components involved in diverse processes at specific stages during the cell cycle. Many proteins bind asymmetrically to the septin collar. The septin assembly is regulated by protein kinase GIN4. Septins are also involved in cell morphogenesis, chlamydospores morphogenesis, bud site selection, chitin deposition, cell cycle regulation, cell compartmentalization, and spore wall formation. CDC11 is required for the correct localization of SEC3 at bud tips and bud necks. Plays a key role in invasive growth and virulence. This Candida albicans (strain SC5314 / ATCC MYA-2876) (Yeast) protein is Septin CDC11 (CDC11).